The primary structure comprises 428 residues: Adenylosuccinate synthetase (428 aa).

GTP-binding positions include 12-18 (GDEGKGK) and 40-42 (GHT). The active-site Proton acceptor is the aspartate 13. Residues aspartate 13 and glycine 40 each contribute to the Mg(2+) site. Residues 13–16 (DEGK), 38–41 (NAGH), threonine 130, arginine 144, glutamine 225, threonine 240, and arginine 304 contribute to the IMP site. Histidine 41 acts as the Proton donor in catalysis. Residue 300 to 306 (VTTGRAR) coordinates substrate. Residues arginine 306, 332–334 (KID), and 414–416 (SVG) contribute to the GTP site.

Belongs to the adenylosuccinate synthetase family. Homodimer. It depends on Mg(2+) as a cofactor.

Its subcellular location is the cytoplasm. The catalysed reaction is IMP + L-aspartate + GTP = N(6)-(1,2-dicarboxyethyl)-AMP + GDP + phosphate + 2 H(+). The protein operates within purine metabolism; AMP biosynthesis via de novo pathway; AMP from IMP: step 1/2. In terms of biological role, plays an important role in the de novo pathway of purine nucleotide biosynthesis. Catalyzes the first committed step in the biosynthesis of AMP from IMP. In Clostridium botulinum (strain Okra / Type B1), this protein is Adenylosuccinate synthetase.